Consider the following 2173-residue polypeptide: Mediator of DNA damage checkpoint protein 1 (2173 aa).

Over residues methionine 1–glutamine 19 the composition is skewed to acidic residues. Residues methionine 1–glutamate 22 form a disordered region. An interaction with CHEK2 region spans residues methionine 1–threonine 150. The segment at glutamate 2–threonine 222 is interaction with the MRN complex. Threonine 4 is subject to Phosphothreonine. Residues asparagine 54–lysine 105 form the FHA domain. Serine 108 carries the post-translational modification Phosphoserine. The segment at leucine 145 to glutamate 570 is required for nuclear localization (NLS1). Threonine 146 is modified (phosphothreonine). A phosphoserine mark is found at serine 168, serine 176, serine 198, and serine 220. Residues serine 198–leucine 320 are disordered. Threonine 222 is modified (phosphothreonine). Low complexity predominate over residues glycine 227–threonine 244. The span at glutamine 259–valine 276 shows a compositional bias: basic and acidic residues. Phosphoserine is present on serine 301. Residue threonine 303 is modified to Phosphothreonine. Positions aspartate 308–leucine 320 are enriched in basic and acidic residues. Serine 331 is subject to Phosphoserine. Threonine 333 is modified (phosphothreonine). Residues glycine 359–glutamate 383 are disordered. Phosphoserine occurs at positions 374 and 378. Threonine 380 carries the phosphothreonine modification. Serine 396, serine 399, and serine 404 each carry phosphoserine. Residue threonine 406 is modified to Phosphothreonine. Serine 413 carries the phosphoserine modification. The tract at residues leucine 444–serine 515 is disordered. The residue at position 451 (threonine 451) is a Phosphothreonine. The residue at position 455 (serine 455) is a Phosphoserine. The residue at position 457 (threonine 457) is a Phosphothreonine. A phosphoserine mark is found at serine 487, serine 497, serine 500, serine 506, serine 507, and serine 515. Threonine 525 is modified (phosphothreonine). Position 592 is a phosphoserine (serine 592). Lysine 618 participates in a covalent cross-link: Glycyl lysine isopeptide (Lys-Gly) (interchain with G-Cter in SUMO1); alternate. Lysine 618 participates in a covalent cross-link: Glycyl lysine isopeptide (Lys-Gly) (interchain with G-Cter in SUMO2); alternate. Serine 631 carries the phosphoserine modification. Disordered regions lie at residues valine 652–aspartate 697 and histidine 773–serine 1770. Residues glycine 673–glutamate 687 are compositionally biased toward basic and acidic residues. Residues aspartate 688 to aspartate 697 are compositionally biased toward acidic residues. 2 positions are modified to phosphoserine: serine 782 and serine 795. N6-acetyllysine is present on lysine 814. Basic and acidic residues-rich tracts occupy residues glutamate 821 to threonine 846, glutamate 853 to lysine 864, aspartate 870 to glutamine 903, and alanine 916 to proline 953. Phosphoserine occurs at positions 957, 1000, 1035, 1070, and 1088. The segment covering serine 957 to serine 969 has biased composition (polar residues). A compositionally biased stretch (basic and acidic residues) spans threonine 1079–glutamate 1090. A compositionally biased stretch (basic residues) spans proline 1105 to serine 1115. Residues proline 1131–serine 1156 are compositionally biased toward polar residues. An interaction with the PRKDC complex region spans residues serine 1150–glutamate 1694. Residues valine 1157 to glutamate 1169 show a composition bias toward low complexity. Position 1159 is a phosphothreonine (threonine 1159). The span at glutamine 1171–threonine 1189 shows a compositional bias: polar residues. At threonine 1200 the chain carries Phosphothreonine. Position 1237 is a phosphoserine (serine 1237). 3 positions are modified to phosphothreonine: threonine 1241, threonine 1282, and threonine 1304. A compositionally biased stretch (low complexity) spans valine 1280–glutamate 1292. Over residues glutamine 1294–serine 1320 the composition is skewed to polar residues. Residues valine 1321–glutamate 1333 are compositionally biased toward low complexity. Polar residues predominate over residues glutamine 1335–threonine 1353. Over residues threonine 1390–serine 1402 the composition is skewed to low complexity. Composition is skewed to polar residues over residues proline 1418–proline 1434, lysine 1456–serine 1487, glutamine 1499–lysine 1527, and glutamine 1540–arginine 1559. 2 positions are modified to phosphoserine: serine 1483 and serine 1484. Lysine 1486 carries the N6-acetyllysine modification. Threonine 1509 and threonine 1550 each carry phosphothreonine. A compositionally biased stretch (low complexity) spans valine 1567–proline 1578. Residues glutamine 1581–threonine 1598 show a composition bias toward polar residues. A phosphothreonine mark is found at threonine 1617 and threonine 1632. Residues serine 1626–alanine 1639 show a composition bias toward polar residues. Serine 1648 carries the phosphoserine modification. Residues threonine 1651 and threonine 1673 each carry the phosphothreonine modification. Positions proline 1664–alanine 1680 are enriched in polar residues. Phosphoserine is present on serine 1688. Threonine 1692, threonine 1714, threonine 1748, and threonine 1755 each carry phosphothreonine. Positions proline 1705–alanine 1721 are enriched in polar residues. The segment covering glutamine 1761–serine 1770 has biased composition (polar residues). At serine 1765 the chain carries Phosphoserine. Threonine 1781 carries the post-translational modification Phosphothreonine. The required for nuclear localization (NLS2) stretch occupies residues proline 1782–threonine 2173. Phosphoserine occurs at positions 1786 and 1795. The tract at residues arginine 1809–asparagine 1971 is disordered. Residue lysine 1824 forms a Glycyl lysine isopeptide (Lys-Gly) (interchain with G-Cter in SUMO2) linkage. Phosphoserine is present on serine 1859. A Glycyl lysine isopeptide (Lys-Gly) (interchain with G-Cter in SUMO2) cross-link involves residue lysine 1874. Position 1884 is a phosphothreonine (threonine 1884). Serine 1904 carries the phosphoserine modification. Residues histidine 1907–threonine 1920 show a composition bias toward polar residues. Lysine 1924 is covalently cross-linked (Glycyl lysine isopeptide (Lys-Gly) (interchain with G-Cter in SUMO1); alternate). Lysine 1924 is covalently cross-linked (Glycyl lysine isopeptide (Lys-Gly) (interchain with G-Cter in SUMO2); alternate). Residues alanine 1931 to methionine 1941 are compositionally biased toward basic and acidic residues. At threonine 1942 the chain carries Phosphothreonine. BRCT domains are found at residues alanine 1976–valine 2054 and arginine 2075–serine 2166. Arginine 2027 bears the Omega-N-methylarginine mark.

Homodimer. Interacts with H2AX, which requires phosphorylation of H2AX on 'Ser-139'. Interacts with the MRN complex, composed of MRE11, RAD50, and NBN. Interacts with CHEK2, which requires ATM-mediated phosphorylation of 'Thr-68' within the FHA domain of CHEK2. Interacts constitutively with the BRCA1-BARD1 complex, SMC1A and TP53BP1. Interacts with ATM and FANCD2, and these interactions are reduced upon DNA damage. Also interacts with the PRKDC complex, composed of XRCC6/KU70, XRCC5/KU80 and PRKDC/XRCC7. This interaction may be required for PRKDC autophosphorylation, which is essential for DNA double strand break (DSB) repair. When phosphorylated by ATM, interacts with RNF8 (via FHA domain). Interacts with CEP164. When phosphorylated, interacts with APTX (via FHA-like domain). Interacts (when phosphorylated) with TOPBP1; promoting TOPBP1 localization to DNA damage sites during mitosis. Interacts (when phosphorylated) with NBN; promoting NBN and MRN complex localization to DNA damage sites. In terms of processing, phosphorylated upon exposure to ionizing radiation (IR), ultraviolet radiation (UV), and hydroxyurea (HU). Phosphorylation in response to IR requires ATM, NBN, and possibly CHEK2. Also phosphorylated during the G2/M phase of the cell cycle and during activation of the mitotic spindle checkpoint. Phosphorylation at Thr-4 by ATM stabilizes and enhances homodimerization via the FHA domain. Phosphorylated at Ser-168 and Ser-198 by CK2 in response to DNA damage during mitosis, promoting interaction with TOPBP1. Phosphorylated by CK2 in response to DNA damage, promoting interaction with NBN and recruitment of the MRN complex to DNA damage sites. Sumoylation at Lys-1924 by PIAS4 following DNA damage promotes ubiquitin-mediated degradation. Post-translationally, ubiquitinated by RNF4, leading to proteasomal degradation; undergoes 'Lys-48'-linked polyubiquitination.

It is found in the nucleus. It localises to the chromosome. Its function is as follows. Histone reader protein required for checkpoint-mediated cell cycle arrest in response to DNA damage within both the S phase and G2/M phases of the cell cycle. Specifically recognizes and binds histone H2AX phosphorylated at 'Ser-139', a marker of DNA damage, serving as a scaffold for the recruitment of DNA repair and signal transduction proteins to discrete foci of DNA damage sites. Also required for downstream events subsequent to the recruitment of these proteins. These include phosphorylation and activation of the ATM, CHEK1 and CHEK2 kinases, and stabilization of TP53/p53 and apoptosis. ATM and CHEK2 may also be activated independently by a parallel pathway mediated by TP53BP1. Required for chromosomal stability during mitosis by promoting recruitment of TOPBP1 to DNA double strand breaks (DSBs): TOPBP1 forms filamentous assemblies that bridge MDC1 and tether broken chromosomes during mitosis. Required for the repair of DSBs via homologous recombination by promoting recruitment of NBN component of the MRN complex to DSBs. The sequence is that of Mediator of DNA damage checkpoint protein 1 (MDC1) from Macaca mulatta (Rhesus macaque).